The sequence spans 310 residues: Nuclear hormone receptor family member nhr-89 (310 aa).

The nuclear receptor DNA-binding region spans 5–79; that stretch reads EGPCRVCHSV…SGMRRDCVRK (75 aa). 2 consecutive NR C4-type zinc fingers follow at residues 8 to 29 and 43 to 67; these read CRVC…CMSC and CPAN…YNKC. An NR LBD domain is found at 101-310; the sequence is KLSESYEELL…TLHQKYQIPF (210 aa).

It belongs to the nuclear hormone receptor family.

The protein localises to the nucleus. Its function is as follows. Orphan nuclear receptor. The sequence is that of Nuclear hormone receptor family member nhr-89 (nhr-89) from Caenorhabditis elegans.